The chain runs to 263 residues: Hydroxyacylglutathione hydrolase (263 aa).

Residues histidine 55, histidine 57, aspartate 59, histidine 60, histidine 117, aspartate 134, and histidine 172 each contribute to the Zn(2+) site.

It belongs to the metallo-beta-lactamase superfamily. Glyoxalase II family. As to quaternary structure, monomer. Zn(2+) serves as cofactor.

It catalyses the reaction an S-(2-hydroxyacyl)glutathione + H2O = a 2-hydroxy carboxylate + glutathione + H(+). It participates in secondary metabolite metabolism; methylglyoxal degradation; (R)-lactate from methylglyoxal: step 2/2. Functionally, thiolesterase that catalyzes the hydrolysis of S-D-lactoyl-glutathione to form glutathione and D-lactic acid. The chain is Hydroxyacylglutathione hydrolase from Shewanella baltica (strain OS195).